The sequence spans 475 residues: Ribulose bisphosphate carboxylase large chain (475 aa).

A propeptide spanning residues 1–2 (MS) is cleaved from the precursor. N-acetylproline is present on Pro3. Lys14 carries the post-translational modification N6,N6,N6-trimethyllysine. Lys175 acts as the Proton acceptor in catalysis. D-ribulose 1,5-bisphosphate contacts are provided by Lys175 and Lys177. Mg(2+)-binding residues include Lys201, Asp203, and Glu204. The residue at position 201 (Lys201) is an N6-carboxylysine. Glu204 serves as a coordination point for D-ribulose 1,5-bisphosphate. Catalysis depends on His294, which acts as the Proton acceptor. Positions 295, 327, 334, 379, 381, 403, and 404 each coordinate D-ribulose 1,5-bisphosphate.

This sequence belongs to the RuBisCO large chain family. Type I subfamily. Heterohexadecamer of 8 large chains and 8 small chains. Heterohexadecamer; disulfide-linked. The disulfide link is formed within the large subunit homodimers. Mg(2+) serves as cofactor. In terms of processing, the disulfide bond which can form in the large chain dimeric partners within the hexadecamer appears to be associated with oxidative stress and protein turnover.

The protein resides in the plastid. The protein localises to the chloroplast. The enzyme catalyses 2 (2R)-3-phosphoglycerate + 2 H(+) = D-ribulose 1,5-bisphosphate + CO2 + H2O. It carries out the reaction D-ribulose 1,5-bisphosphate + O2 = 2-phosphoglycolate + (2R)-3-phosphoglycerate + 2 H(+). RuBisCO catalyzes two reactions: the carboxylation of D-ribulose 1,5-bisphosphate, the primary event in carbon dioxide fixation, as well as the oxidative fragmentation of the pentose substrate in the photorespiration process. Both reactions occur simultaneously and in competition at the same active site. Binds to abscisic acid (ABA); only half of the possible binding sites are occupied in the crystal and there are indications this is a low affinity site. The protein is Ribulose bisphosphate carboxylase large chain of Pisum sativum (Garden pea).